We begin with the raw amino-acid sequence, 151 residues long: Large ribosomal subunit protein bL9 (151 aa).

It belongs to the bacterial ribosomal protein bL9 family.

Its function is as follows. Binds to the 23S rRNA. This is Large ribosomal subunit protein bL9 from Thermosipho melanesiensis (strain DSM 12029 / CIP 104789 / BI429).